A 182-amino-acid chain; its full sequence is Testis development-related protein (182 aa).

Disordered stretches follow at residues 1–38 (MWKL…GASL), 52–73 (DEEH…QRLR), and 95–151 (QPKK…NSAS). Serine 7 is modified (phosphoserine). The segment covering 22–37 (RGAPPASAAAPASGAS) has biased composition (low complexity). Residues 59 to 70 (TSRSPKSKGTNQ) are compositionally biased toward polar residues. Positions 116–125 (VADHTEDDRS) are enriched in basic and acidic residues.

Belongs to the TDRP family. In terms of assembly, interacts with PRM2. As to expression, strongly expressed in testis. Also detected at lower levels in epididymis, bone marrow and kidney.

It is found in the nucleus. The protein resides in the cytoplasm. Functionally, contributes to normal sperm motility, but not essential for male fertility. The chain is Testis development-related protein (Tdrp) from Mus musculus (Mouse).